The chain runs to 89 residues: Small ribosomal subunit protein uS15 (89 aa).

It belongs to the universal ribosomal protein uS15 family. As to quaternary structure, part of the 30S ribosomal subunit. Forms a bridge to the 50S subunit in the 70S ribosome, contacting the 23S rRNA.

One of the primary rRNA binding proteins, it binds directly to 16S rRNA where it helps nucleate assembly of the platform of the 30S subunit by binding and bridging several RNA helices of the 16S rRNA. Its function is as follows. Forms an intersubunit bridge (bridge B4) with the 23S rRNA of the 50S subunit in the ribosome. This Jannaschia sp. (strain CCS1) protein is Small ribosomal subunit protein uS15.